A 344-amino-acid chain; its full sequence is DNA-directed RNA polymerase subunit alpha (344 aa).

Residues 1–239 form an alpha N-terminal domain (alpha-NTD) region; that stretch reads MADHWNKLTR…DQLQSFISFD (239 aa). The tract at residues 254–344 is alpha C-terminal domain (alpha-CTD); it reads VLPYDHNLLR…ENLSKQYSED (91 aa).

The protein belongs to the RNA polymerase alpha chain family. In terms of assembly, homodimer. The RNAP catalytic core consists of 2 alpha, 1 beta, 1 beta' and 1 omega subunit. When a sigma factor is associated with the core the holoenzyme is formed, which can initiate transcription.

It carries out the reaction RNA(n) + a ribonucleoside 5'-triphosphate = RNA(n+1) + diphosphate. DNA-dependent RNA polymerase catalyzes the transcription of DNA into RNA using the four ribonucleoside triphosphates as substrates. This Anaplasma phagocytophilum (strain HZ) protein is DNA-directed RNA polymerase subunit alpha.